Consider the following 312-residue polypeptide: tRNA uridine(34) hydroxylase (312 aa).

The 91-residue stretch at 147–237 (SDRNVIFIDM…GILGYVHDAN (91 aa)) folds into the Rhodanese domain. The active-site Cysteine persulfide intermediate is Cys201.

This sequence belongs to the TrhO family.

The catalysed reaction is uridine(34) in tRNA + AH2 + O2 = 5-hydroxyuridine(34) in tRNA + A + H2O. Its function is as follows. Catalyzes oxygen-dependent 5-hydroxyuridine (ho5U) modification at position 34 in tRNAs. In Buchnera aphidicola subsp. Schizaphis graminum (strain Sg), this protein is tRNA uridine(34) hydroxylase.